The chain runs to 206 residues: Guanylate kinase (206 aa).

The Guanylate kinase-like domain occupies 4 to 182; that stretch reads ANLFIISAPS…AVQNLIHIIS (179 aa). 11–18 lines the ATP pocket; that stretch reads APSGAGKT.

Belongs to the guanylate kinase family.

The protein resides in the cytoplasm. The enzyme catalyses GMP + ATP = GDP + ADP. Its function is as follows. Essential for recycling GMP and indirectly, cGMP. The sequence is that of Guanylate kinase from Coxiella burnetii (strain RSA 493 / Nine Mile phase I).